A 1390-amino-acid chain; its full sequence is DNA-directed RNA polymerase subunit beta (1390 aa).

It belongs to the RNA polymerase beta chain family. In terms of assembly, the RNAP catalytic core consists of 2 alpha, 1 beta, 1 beta' and 1 omega subunit. When a sigma factor is associated with the core the holoenzyme is formed, which can initiate transcription.

The enzyme catalyses RNA(n) + a ribonucleoside 5'-triphosphate = RNA(n+1) + diphosphate. Functionally, DNA-dependent RNA polymerase catalyzes the transcription of DNA into RNA using the four ribonucleoside triphosphates as substrates. This is DNA-directed RNA polymerase subunit beta from Gluconobacter oxydans (strain 621H) (Gluconobacter suboxydans).